The chain runs to 176 residues: Peptide deformylase (176 aa).

Cys94 and His136 together coordinate Fe cation. Glu137 is a catalytic residue. A Fe cation-binding site is contributed by His140.

Belongs to the polypeptide deformylase family. Fe(2+) serves as cofactor.

It catalyses the reaction N-terminal N-formyl-L-methionyl-[peptide] + H2O = N-terminal L-methionyl-[peptide] + formate. Removes the formyl group from the N-terminal Met of newly synthesized proteins. Requires at least a dipeptide for an efficient rate of reaction. N-terminal L-methionine is a prerequisite for activity but the enzyme has broad specificity at other positions. The polypeptide is Peptide deformylase (Mesorhizobium japonicum (strain LMG 29417 / CECT 9101 / MAFF 303099) (Mesorhizobium loti (strain MAFF 303099))).